The following is a 525-amino-acid chain: Arabinose import ATP-binding protein AraG 2 (525 aa).

The interval 1 to 25 (MTDTTIRARGAQAAGSPAGAGPLDA) is disordered. Residues 7-25 (RARGAQAAGSPAGAGPLDA) are compositionally biased toward low complexity. 2 ABC transporter domains span residues 35–270 (LELD…MVGR) and 281–524 (REPG…LALP). An ATP-binding site is contributed by 67–74 (GENGAGKS).

This sequence belongs to the ABC transporter superfamily. Arabinose importer (TC 3.A.1.2.2) family. As to quaternary structure, the complex is composed of two ATP-binding proteins (AraG), two transmembrane proteins (AraH) and a solute-binding protein (AraF).

It is found in the cell inner membrane. It catalyses the reaction L-arabinose(out) + ATP + H2O = L-arabinose(in) + ADP + phosphate + H(+). In terms of biological role, part of the ABC transporter complex AraFGH involved in arabinose import. Responsible for energy coupling to the transport system. The polypeptide is Arabinose import ATP-binding protein AraG 2 (Burkholderia thailandensis (strain ATCC 700388 / DSM 13276 / CCUG 48851 / CIP 106301 / E264)).